The primary structure comprises 169 residues: SsrA-binding protein (169 aa).

Belongs to the SmpB family.

The protein localises to the cytoplasm. Functionally, required for rescue of stalled ribosomes mediated by trans-translation. Binds to transfer-messenger RNA (tmRNA), required for stable association of tmRNA with ribosomes. tmRNA and SmpB together mimic tRNA shape, replacing the anticodon stem-loop with SmpB. tmRNA is encoded by the ssrA gene; the 2 termini fold to resemble tRNA(Ala) and it encodes a 'tag peptide', a short internal open reading frame. During trans-translation Ala-aminoacylated tmRNA acts like a tRNA, entering the A-site of stalled ribosomes, displacing the stalled mRNA. The ribosome then switches to translate the ORF on the tmRNA; the nascent peptide is terminated with the 'tag peptide' encoded by the tmRNA and targeted for degradation. The ribosome is freed to recommence translation, which seems to be the essential function of trans-translation. The sequence is that of SsrA-binding protein from Mycolicibacterium paratuberculosis (strain ATCC BAA-968 / K-10) (Mycobacterium paratuberculosis).